The following is an 85-amino-acid chain: Putative sodium channel toxin Ts34 (85 aa).

A signal peptide spans 1 to 17 (MNLPLLLLITILIEIHA). One can recognise an LCN-type CS-alpha/beta domain in the interval 19–82 (KDGYVIYKNS…IYGETGSYCW (64 aa)). Disulfide bonds link Cys-30–Cys-81, Cys-34–Cys-57, Cys-43–Cys-62, and Cys-47–Cys-64.

This sequence belongs to the long (4 C-C) scorpion toxin superfamily. Sodium channel inhibitor family. As to expression, expressed by the venom gland.

The protein localises to the secreted. Putative sodium channel toxin. The protein is Putative sodium channel toxin Ts34 of Tityus serrulatus (Brazilian scorpion).